A 255-amino-acid polypeptide reads, in one-letter code: MATIGALLLRFFFIAVLMSSQKSWAIKEEHTIIQAEFYLLPDKRGEYMFDFDGDEIFHVDIEKSETIWRLEEFAKFASFEAQGALANIAVDKANLDVMKKRSNNTPDANVAPEVTVLSRSPVNLGEPNILVCFIDKFSPPVVNVTWLRNGQPVTEGVSETVFLPRDDHLFRKFHYLTFLPSTDDFYDCEVDHWGLEEPLRKHWEFEEKTLLPETKENVVCALGLFVGLVGIVVGIILIMKGIKKRNVVERRQGAL.

Positions 1–25 (MATIGALLLRFFFIAVLMSSQKSWA) are cleaved as a signal peptide. The segment at 26-109 (IKEEHTIIQA…KRSNNTPDAN (84 aa)) is alpha-1. Over 26-217 (IKEEHTIIQA…KTLLPETKEN (192 aa)) the chain is Extracellular. The tract at residues 110-203 (VAPEVTVLSR…GLEEPLRKHW (94 aa)) is alpha-2. The region spanning 112 to 204 (PEVTVLSRSP…LEEPLRKHWE (93 aa)) is the Ig-like C1-type domain. Cysteines 132 and 188 form a disulfide. Asparagine 143 is a glycosylation site (N-linked (GlcNAc...) asparagine). A connecting peptide region spans residues 204–216 (EFEEKTLLPETKE). Residues 218–238 (VVCALGLFVGLVGIVVGIILI) traverse the membrane as a helical segment. The Cytoplasmic segment spans residues 239 to 255 (MKGIKKRNVVERRQGAL).

This sequence belongs to the MHC class II family.

The protein localises to the membrane. In Mus musculus (Mouse), this protein is H-2 class II histocompatibility antigen, E-U alpha chain (H2-Ea).